Reading from the N-terminus, the 187-residue chain is Transcriptional activator of sulfur metabolism MET28 (187 aa).

The region spanning 105–168 is the bZIP domain; that stretch reads DKIKQERRRK…EFWKAKLNDI (64 aa). The basic motif stretch occupies residues 106 to 136; that stretch reads KIKQERRRKNTEASQRFRIRKKQKNFENMNK. Residues 137–151 form a leucine-zipper region; it reads LQNLNTQINKLRDRI.

The protein belongs to the bZIP family. In terms of assembly, interacts with MET4 to form a heteromeric complex which also includes CBF1. Forms two alternate complexes associating MET28 with MET4 and either MET31 or MET32. Binds to DNA through the MET4-MET28-CBF1 complex.

The protein resides in the cytoplasm. The protein localises to the nucleus. Its function is as follows. Acts as an accessory factor in the activation of sulfur amino acids metabolism genes. Possesses no intrinsic transcription activation abilities. Binds to the MET16 promoter as a complex with MET4 and CBF1. Enhances the DNA-binding activity of CBF1. In Saccharomyces cerevisiae (strain ATCC 204508 / S288c) (Baker's yeast), this protein is Transcriptional activator of sulfur metabolism MET28 (MET28).